Reading from the N-terminus, the 809-residue chain is Ribosome biogenesis protein ERB1 (809 aa).

The tract at residues 1-107 (MSKSSKVGMT…SDTRSITDAI (107 aa)) is disordered. Acidic residues-rich tracts occupy residues 30 to 70 (AEVD…EDSD) and 77 to 97 (LGEE…EPQE). Residues 267 to 383 (RFVPSKHEAK…LRKVPGYQES (117 aa)) are required for interaction with NOP7. A required for interaction with YTM1 region spans residues 383–419 (SVRERFERCLDLYLAPRVRHNKLNIDPESLIPELPSP). WD repeat units lie at residues 435–474 (GHTD…QVFN) and 483–523 (NDED…FDIE). The segment at 545–569 (EEKFKNDEGNEDEDDEDDSATSTAV) is disordered. The span at 553-563 (GNEDEDDEDDS) shows a compositional bias: acidic residues. WD repeat units follow at residues 593-635 (QCRK…SQSP), 638-676 (KSKG…LVKK), 679-718 (PGVR…TPYK), 722-762 (YHEK…DLMT), and 778-809 (VNSI…LWTT).

The protein belongs to the WD repeat BOP1/ERB1 family. In terms of assembly, component of the NOP7 complex, composed of ERB1, NOP7 and YTM1. The complex is held together by ERB1, which interacts with NOP7 via its N-terminal domain and with YTM1 via a high-affinity interaction between the seven-bladed beta-propeller domains of the 2 proteins. The NOP7 complex associates with the 66S pre-ribosome.

It is found in the nucleus. The protein resides in the nucleolus. The protein localises to the nucleoplasm. In terms of biological role, component of the NOP7 complex, which is required for maturation of the 25S and 5.8S ribosomal RNAs and formation of the 60S ribosome. The sequence is that of Ribosome biogenesis protein ERB1 from Scheffersomyces stipitis (strain ATCC 58785 / CBS 6054 / NBRC 10063 / NRRL Y-11545) (Yeast).